The primary structure comprises 185 residues: UPF0669 protein C6orf120 homolog (185 aa).

The signal sequence occupies residues 1–23 (MAARWRRILIVFVAAQVLCLVNT). N-linked (GlcNAc...) asparagine glycosylation is present at N47.

This sequence belongs to the UPF0669 family.

Its subcellular location is the secreted. In Gallus gallus (Chicken), this protein is UPF0669 protein C6orf120 homolog.